Here is a 160-residue protein sequence, read N- to C-terminus: Cyclic pyranopterin monophosphate synthase (160 aa).

Substrate contacts are provided by residues 77–79 (LCH) and 115–116 (ME). Residue Asp-130 is part of the active site.

It belongs to the MoaC family. In terms of assembly, homohexamer; trimer of dimers.

The catalysed reaction is (8S)-3',8-cyclo-7,8-dihydroguanosine 5'-triphosphate = cyclic pyranopterin phosphate + diphosphate. It participates in cofactor biosynthesis; molybdopterin biosynthesis. Functionally, catalyzes the conversion of (8S)-3',8-cyclo-7,8-dihydroguanosine 5'-triphosphate to cyclic pyranopterin monophosphate (cPMP). This chain is Cyclic pyranopterin monophosphate synthase, found in Parvibaculum lavamentivorans (strain DS-1 / DSM 13023 / NCIMB 13966).